The sequence spans 181 residues: Large ribosomal subunit protein uL10 (181 aa).

It belongs to the universal ribosomal protein uL10 family. As to quaternary structure, part of the ribosomal stalk of the 50S ribosomal subunit. The N-terminus interacts with L11 and the large rRNA to form the base of the stalk. The C-terminus forms an elongated spine to which L12 dimers bind in a sequential fashion forming a multimeric L10(L12)X complex.

Forms part of the ribosomal stalk, playing a central role in the interaction of the ribosome with GTP-bound translation factors. This is Large ribosomal subunit protein uL10 from Trichormus variabilis (strain ATCC 29413 / PCC 7937) (Anabaena variabilis).